A 396-amino-acid chain; its full sequence is MAEVNVRNFNINFGPQHPAAHGVLRMVLELDGEVVERVDPHIGLLHRGTEKLMETKTYLQAGPYLDRLDYVAPMNQEHAFVLAIEKLLNIKVPKRGQLIRVLFSEIGRILNHLLNVTTQAMDVGALTPPLWGFEQRERLMIFYERACGARLHANYFRPGGVHQDLPESLVEDIGNFIDPFLVSLEKLDALVTPNRIFKQRNVDIGIVSIDEAWARSFSGVMIRGAGVPWDLRKSQPYECYDEMEFDIPIGKNSDCYDRYLIRMEEMRQSAKIMRQCVERLLGAEKNGPVSSLDRKIVPPKRSEMKSSMEALIHHFKLYTEGFHTPPGEVYVAVEAPKGEFGVYLVSDGTNKPYRVKLRAPGFAHLQAMDFLTRGHMLADATAILGSIDIVFGEVDR.

The protein belongs to the complex I 49 kDa subunit family. NDH-1 is composed of 14 different subunits. Subunits NuoB, C, D, E, F, and G constitute the peripheral sector of the complex.

It localises to the cell inner membrane. The enzyme catalyses a quinone + NADH + 5 H(+)(in) = a quinol + NAD(+) + 4 H(+)(out). Its function is as follows. NDH-1 shuttles electrons from NADH, via FMN and iron-sulfur (Fe-S) centers, to quinones in the respiratory chain. The immediate electron acceptor for the enzyme in this species is believed to be ubiquinone. Couples the redox reaction to proton translocation (for every two electrons transferred, four hydrogen ions are translocated across the cytoplasmic membrane), and thus conserves the redox energy in a proton gradient. In Bartonella tribocorum (strain CIP 105476 / IBS 506), this protein is NADH-quinone oxidoreductase subunit D.